The sequence spans 270 residues: Fructose-2,6-bisphosphatase TIGAR (270 aa).

Residue histidine 11 is the Tele-phosphohistidine intermediate of the active site. N6-acetyllysine is present on lysine 50. Glutamate 89 (proton donor/acceptor) is an active-site residue.

It belongs to the phosphoglycerate mutase family. In terms of assembly, interacts with HK2; the interaction increases hexokinase HK2 activity in a hypoxia- and HIF1A-dependent manner, resulting in the regulation of mitochondrial membrane potential, thus increasing NADPH production and decreasing intracellular ROS levels.

The protein localises to the cytoplasm. It localises to the nucleus. The protein resides in the mitochondrion. It carries out the reaction beta-D-fructose 2,6-bisphosphate + H2O = beta-D-fructose 6-phosphate + phosphate. In terms of biological role, fructose-bisphosphatase hydrolyzing fructose-2,6-bisphosphate as well as fructose-1,6-bisphosphate. Acts as a negative regulator of glycolysis by lowering intracellular levels of fructose-2,6-bisphosphate in a p53/TP53-dependent manner, resulting in the pentose phosphate pathway (PPP) activation and NADPH production. Contributes to the generation of reduced glutathione to cause a decrease in intracellular reactive oxygen species (ROS) content, correlating with its ability to protect cells from oxidative or metabolic stress-induced cell death. Plays a role in promoting protection against cell death during hypoxia by decreasing mitochondria ROS levels in a HK2-dependent manner through a mechanism that is independent of its fructose-bisphosphatase activity. In response to cardiac damage stress, mediates p53-induced inhibition of myocyte mitophagy through ROS levels reduction and the subsequent inactivation of BNIP3. Reduced mitophagy results in an enhanced apoptotic myocyte cell death, and exacerbates cardiac damage. Plays a role in adult intestinal regeneration; contributes to the growth, proliferation and survival of intestinal crypts following tissue ablation. Plays a neuroprotective role against ischemic brain damage by enhancing PPP flux and preserving mitochondria functions. Protects glioma cells from hypoxia- and ROS-induced cell death by inhibiting glycolysis and activating mitochondrial energy metabolism and oxygen consumption in a TKTL1-dependent and p53/TP53-independent manner. Plays a role in cancer cell survival by promoting DNA repair through activating PPP flux in a CDK5-ATM-dependent signaling pathway during hypoxia and/or genome stress-induced DNA damage responses. Involved in intestinal tumor progression. This is Fructose-2,6-bisphosphatase TIGAR from Bos taurus (Bovine).